Consider the following 154-residue polypeptide: Hemiasterlin resistant protein 1 (154 aa).

Disordered regions lie at residues 1 to 64 (MVRR…PGLM) and 86 to 109 (GMFTGGGSSHAEQAPAAAAAPAGA). Low complexity-rich tracts occupy residues 7–28 (ASPSPSAPVRSAPRPAAQSSFA), 48–57 (TPMGAPMGAP), and 96–109 (AEQAPAAAAAPAGA). One can recognise a CHCH domain in the interval 116–154 (SQPCEFEWRQFVDCAQNQSDVSLCNGFNDIFKQCKARYA). Short sequence motifs (cx9C motif) lie at residues 119–129 (CEFEWRQFVDC) and 139–149 (CNGFNDIFKQC). Disulfide bonds link cysteine 119–cysteine 149 and cysteine 129–cysteine 139.

The sequence is that of Hemiasterlin resistant protein 1 (har-1) from Caenorhabditis elegans.